The primary structure comprises 434 residues: Enolase 2 (434 aa).

Q171 lines the (2R)-2-phosphoglycerate pocket. The Proton donor role is filled by E213. The Mg(2+) site is built by D250, E293, and D320. Positions 345, 374, 375, and 396 each coordinate (2R)-2-phosphoglycerate. K345 (proton acceptor) is an active-site residue.

This sequence belongs to the enolase family. Requires Mg(2+) as cofactor.

The protein localises to the cytoplasm. It localises to the secreted. Its subcellular location is the cell surface. It carries out the reaction (2R)-2-phosphoglycerate = phosphoenolpyruvate + H2O. Its pathway is carbohydrate degradation; glycolysis; pyruvate from D-glyceraldehyde 3-phosphate: step 4/5. In terms of biological role, catalyzes the reversible conversion of 2-phosphoglycerate (2-PG) into phosphoenolpyruvate (PEP). It is essential for the degradation of carbohydrates via glycolysis. The polypeptide is Enolase 2 (Streptomyces coelicolor (strain ATCC BAA-471 / A3(2) / M145)).